A 360-amino-acid polypeptide reads, in one-letter code: Phospho-N-acetylmuramoyl-pentapeptide-transferase (360 aa).

Transmembrane regions (helical) follow at residues Gly-27–Leu-47, Thr-71–Ala-91, Leu-93–Phe-113, Leu-134–Ala-154, Phe-168–Gly-188, Gly-199–Ser-219, Leu-239–Pro-259, Ala-262–Val-282, Ile-288–Val-308, and Gln-337–Leu-357.

It belongs to the glycosyltransferase 4 family. MraY subfamily. The cofactor is Mg(2+).

The protein localises to the cell inner membrane. It carries out the reaction UDP-N-acetyl-alpha-D-muramoyl-L-alanyl-gamma-D-glutamyl-meso-2,6-diaminopimeloyl-D-alanyl-D-alanine + di-trans,octa-cis-undecaprenyl phosphate = di-trans,octa-cis-undecaprenyl diphospho-N-acetyl-alpha-D-muramoyl-L-alanyl-D-glutamyl-meso-2,6-diaminopimeloyl-D-alanyl-D-alanine + UMP. It functions in the pathway cell wall biogenesis; peptidoglycan biosynthesis. Functionally, catalyzes the initial step of the lipid cycle reactions in the biosynthesis of the cell wall peptidoglycan: transfers peptidoglycan precursor phospho-MurNAc-pentapeptide from UDP-MurNAc-pentapeptide onto the lipid carrier undecaprenyl phosphate, yielding undecaprenyl-pyrophosphoryl-MurNAc-pentapeptide, known as lipid I. This Mesorhizobium japonicum (strain LMG 29417 / CECT 9101 / MAFF 303099) (Mesorhizobium loti (strain MAFF 303099)) protein is Phospho-N-acetylmuramoyl-pentapeptide-transferase.